The primary structure comprises 165 residues: ATP synthase subunit b (165 aa).

The chain crosses the membrane as a helical span at residues 7–27 (GTSLGNLLIVTGSFILLLLLV).

This sequence belongs to the ATPase B chain family. In terms of assembly, F-type ATPases have 2 components, F(1) - the catalytic core - and F(0) - the membrane proton channel. F(1) has five subunits: alpha(3), beta(3), gamma(1), delta(1), epsilon(1). F(0) has three main subunits: a(1), b(2) and c(10-14). The alpha and beta chains form an alternating ring which encloses part of the gamma chain. F(1) is attached to F(0) by a central stalk formed by the gamma and epsilon chains, while a peripheral stalk is formed by the delta and b chains.

It is found in the cell membrane. In terms of biological role, f(1)F(0) ATP synthase produces ATP from ADP in the presence of a proton or sodium gradient. F-type ATPases consist of two structural domains, F(1) containing the extramembraneous catalytic core and F(0) containing the membrane proton channel, linked together by a central stalk and a peripheral stalk. During catalysis, ATP synthesis in the catalytic domain of F(1) is coupled via a rotary mechanism of the central stalk subunits to proton translocation. Component of the F(0) channel, it forms part of the peripheral stalk, linking F(1) to F(0). The sequence is that of ATP synthase subunit b from Streptococcus mutans serotype c (strain ATCC 700610 / UA159).